We begin with the raw amino-acid sequence, 208 residues long: Vacuolar ATPase assembly protein VMA12 (208 aa).

A2 is modified (N-acetylalanine). 2 helical membrane passes run 146–166 (LVIT…CTYL) and 179–199 (VLAA…VMVR).

Accessory component of the multisubunit proton-transporting vacuolar (V)-ATPase protein pump.

The protein localises to the cytoplasmic vesicle. Its subcellular location is the COPI-coated vesicle membrane. The protein resides in the endoplasmic reticulum-Golgi intermediate compartment membrane. It is found in the endoplasmic reticulum membrane. Functionally, accessory component of the proton-transporting vacuolar (V)-ATPase protein pump involved in intracellular iron homeostasis. In aerobic conditions, required for intracellular iron homeostasis, thus triggering the activity of Fe(2+) prolyl hydroxylase (PHD) enzymes, and leading to HIF1A hydroxylation and subsequent proteasomal degradation. Necessary for endolysosomal acidification and lysosomal degradation. May be involved in Golgi homeostasis. Binds 20(S)-hydroxycholesterol (20(S)-OHC). This is Vacuolar ATPase assembly protein VMA12 from Homo sapiens (Human).